A 166-amino-acid polypeptide reads, in one-letter code: Phosphopantetheine adenylyltransferase (166 aa).

Residue T14 participates in substrate binding. ATP-binding positions include 14 to 15 and H22; that span reads TF. Substrate contacts are provided by K46, L78, and R92. Residues 93–95, E103, and 128–134 each bind ATP; these read GLR and WMYLSSS.

It belongs to the bacterial CoaD family. As to quaternary structure, homohexamer. Mg(2+) is required as a cofactor.

The protein localises to the cytoplasm. The catalysed reaction is (R)-4'-phosphopantetheine + ATP + H(+) = 3'-dephospho-CoA + diphosphate. The protein operates within cofactor biosynthesis; coenzyme A biosynthesis; CoA from (R)-pantothenate: step 4/5. In terms of biological role, reversibly transfers an adenylyl group from ATP to 4'-phosphopantetheine, yielding dephospho-CoA (dPCoA) and pyrophosphate. The sequence is that of Phosphopantetheine adenylyltransferase from Maridesulfovibrio salexigens (strain ATCC 14822 / DSM 2638 / NCIMB 8403 / VKM B-1763) (Desulfovibrio salexigens).